A 551-amino-acid polypeptide reads, in one-letter code: Terpene synthase 10 (551 aa).

Residues aspartate 303, aspartate 307, and glutamate 455 each coordinate Mg(2+). The DDXXD motif motif lies at aspartate 303–aspartate 307.

This sequence belongs to the terpene synthase family. The cofactor is Mg(2+).

Catalyzes the cyclization of farnesyl diphosphate to sesquiterpene olefins. This Ricinus communis (Castor bean) protein is Terpene synthase 10 (TPS10).